The chain runs to 418 residues: Gamma-glutamyl phosphate reductase (418 aa).

It belongs to the gamma-glutamyl phosphate reductase family.

The protein resides in the cytoplasm. It catalyses the reaction L-glutamate 5-semialdehyde + phosphate + NADP(+) = L-glutamyl 5-phosphate + NADPH + H(+). It functions in the pathway amino-acid biosynthesis; L-proline biosynthesis; L-glutamate 5-semialdehyde from L-glutamate: step 2/2. Its function is as follows. Catalyzes the NADPH-dependent reduction of L-glutamate 5-phosphate into L-glutamate 5-semialdehyde and phosphate. The product spontaneously undergoes cyclization to form 1-pyrroline-5-carboxylate. The sequence is that of Gamma-glutamyl phosphate reductase from Moorella thermoacetica (strain ATCC 39073 / JCM 9320).